Reading from the N-terminus, the 643-residue chain is Long-chain fatty acid transport protein 4 (643 aa).

2 helical membrane passes run 20 to 42 and 139 to 156; these read LPWTQVGFSLLFLYLGSGGWRFI and FVGLWLGMAKLGVEAALI. AMP is bound at residue 243-254; sequence YIYTSGTTGLPK.

It belongs to the ATP-dependent AMP-binding enzyme family.

It is found in the endoplasmic reticulum membrane. It catalyses the reaction a fatty acid(in) = a fatty acid(out). It carries out the reaction (9Z,12Z)-octadecadienoate(out) = (9Z,12Z)-octadecadienoate(in). The enzyme catalyses (9Z)-octadecenoate(out) = (9Z)-octadecenoate(in). The catalysed reaction is hexadecanoate(out) = hexadecanoate(in). It catalyses the reaction a long-chain fatty acid + ATP + CoA = a long-chain fatty acyl-CoA + AMP + diphosphate. It carries out the reaction (5Z,8Z,11Z,14Z)-eicosatetraenoate + ATP + CoA = (5Z,8Z,11Z,14Z)-eicosatetraenoyl-CoA + AMP + diphosphate. The enzyme catalyses (9Z)-octadecenoate + ATP + CoA = (9Z)-octadecenoyl-CoA + AMP + diphosphate. The catalysed reaction is hexadecanoate + ATP + CoA = hexadecanoyl-CoA + AMP + diphosphate. It catalyses the reaction (E)-hexadec-2-enoate + ATP + CoA = (2E)-hexadecenoyl-CoA + AMP + diphosphate. It carries out the reaction a very long-chain fatty acid + ATP + CoA = a very long-chain fatty acyl-CoA + AMP + diphosphate. The enzyme catalyses tetracosanoate + ATP + CoA = tetracosanoyl-CoA + AMP + diphosphate. Functionally, mediates the import of long-chain fatty acids (LCFA) into the cell by facilitating their transport across cell membranes. Appears to be the principal fatty acid transporter in small intestinal enterocytes. Also functions as an acyl-CoA ligase catalyzing the ATP-dependent formation of fatty acyl-CoA using LCFA and very-long-chain fatty acids (VLCFA) as substrates, which prevents fatty acid efflux from cells and might drive more fatty acid uptake. Plays a role in the formation of the epidermal barrier. Required for fat absorption in early embryogenesis. Probably involved in fatty acid transport across the blood barrier. Indirectly inhibits RPE65 via substrate competition and via production of VLCFA derivatives like lignoceroyl-CoA. Prevents light-induced degeneration of rods and cones. The chain is Long-chain fatty acid transport protein 4 (SLC27A4) from Pongo abelii (Sumatran orangutan).